We begin with the raw amino-acid sequence, 448 residues long: Phosphoglucosamine mutase (448 aa).

The Phosphoserine intermediate role is filled by Ser-100. Ser-100, Asp-240, Asp-242, and Asp-244 together coordinate Mg(2+). Ser-100 is modified (phosphoserine).

It belongs to the phosphohexose mutase family. Mg(2+) serves as cofactor. Activated by phosphorylation.

It carries out the reaction alpha-D-glucosamine 1-phosphate = D-glucosamine 6-phosphate. Its function is as follows. Catalyzes the conversion of glucosamine-6-phosphate to glucosamine-1-phosphate. This chain is Phosphoglucosamine mutase, found in Geobacillus thermodenitrificans (strain NG80-2).